The chain runs to 805 residues: ATP-dependent RNA helicase mak-5 (805 aa).

Positions methionine 1–threonine 10 are enriched in basic residues. Disordered stretches follow at residues methionine 1–valine 33 and valine 79–threonine 189. Over residues glutamate 85–glutamate 100 the composition is skewed to acidic residues. Basic and acidic residues-rich tracts occupy residues glutamine 110–alanine 119, alanine 126–lysine 143, and lysine 164–threonine 189. Residues serine 209 to serine 237 carry the Q motif motif. In terms of domain architecture, Helicase ATP-binding spans isoleucine 240 to serine 463. Residue alanine 253–threonine 260 participates in ATP binding. The DEAD box signature appears at aspartate 372–aspartate 375. Residues phenylalanine 390–lysine 406 are compositionally biased toward basic and acidic residues. The segment at phenylalanine 390–lysine 435 is disordered. A compositionally biased stretch (acidic residues) spans threonine 410 to glutamate 431. The Helicase C-terminal domain occupies tyrosine 510–valine 666. Residues alanine 729–lysine 751 are disordered.

Belongs to the DEAD box helicase family. DDX24/MAK5 subfamily.

The protein resides in the nucleus. Its subcellular location is the nucleolus. It catalyses the reaction ATP + H2O = ADP + phosphate + H(+). ATP-binding RNA helicase involved in the biogenesis of 60S ribosomal subunits and is required for the normal formation of 25S and 5.8S rRNAs. This is ATP-dependent RNA helicase mak-5 (mak-5) from Neurospora crassa (strain ATCC 24698 / 74-OR23-1A / CBS 708.71 / DSM 1257 / FGSC 987).